Consider the following 37-residue polypeptide: Large ribosomal subunit protein bL36 (37 aa).

Belongs to the bacterial ribosomal protein bL36 family.

The polypeptide is Large ribosomal subunit protein bL36 (Nitratidesulfovibrio vulgaris (strain DSM 19637 / Miyazaki F) (Desulfovibrio vulgaris)).